Here is a 301-residue protein sequence, read N- to C-terminus: ATP synthase gamma chain (301 aa).

This sequence belongs to the ATPase gamma chain family. As to quaternary structure, F-type ATPases have 2 components, CF(1) - the catalytic core - and CF(0) - the membrane proton channel. CF(1) has five subunits: alpha(3), beta(3), gamma(1), delta(1), epsilon(1). CF(0) has three main subunits: a, b and c.

It is found in the cell inner membrane. Functionally, produces ATP from ADP in the presence of a proton gradient across the membrane. The gamma chain is believed to be important in regulating ATPase activity and the flow of protons through the CF(0) complex. The sequence is that of ATP synthase gamma chain from Helicobacter pylori (strain HPAG1).